A 256-amino-acid polypeptide reads, in one-letter code: Small ribosomal subunit protein eS1 (256 aa).

Ala-2 is subject to N-acetylalanine; partial.

It belongs to the eukaryotic ribosomal protein eS1 family. As to quaternary structure, component of the small ribosomal subunit. Mature ribosomes consist of a small (40S) and a large (60S) subunit. The 40S subunit contains about 33 different proteins and 1 molecule of RNA (18S). The 60S subunit contains about 49 different proteins and 3 molecules of RNA (25S, 5.8S and 5S).

It is found in the cytoplasm. The protein is Small ribosomal subunit protein eS1 of Lentinula edodes (Shiitake mushroom).